A 1132-amino-acid chain; its full sequence is Sentrin-specific protease 6 (1132 aa).

Disordered stretches follow at residues 23–51 (SKRD…DGAN) and 327–388 (LPGG…VPST). 5 positions are modified to phosphoserine: Ser-41, Ser-355, Ser-356, Ser-371, and Ser-373. Thr-436 carries the phosphothreonine modification. Lys-648 participates in a covalent cross-link: Glycyl lysine isopeptide (Lys-Gly) (interchain with G-Cter in SUMO2). The interval 686 to 1132 (ISVTNEDLHC…QYASASGGSE (447 aa)) is protease. Catalysis depends on residues His-785 and Asp-936. The residue at position 938 (Ser-938) is a Phosphoserine. The active site involves Cys-1049. At Ser-1131 the chain carries Phosphoserine.

This sequence belongs to the peptidase C48 family. Interacts with RXRA. Forms a complex with KAT5-TIP60 and UBE2I in response to UV irradiation. Interacts with RPA1 to maintain it in hyposumoylated state during S phase preventing DNA repair initiation.

It localises to the nucleus. Its pathway is protein modification; protein sumoylation. In terms of biological role, protease that deconjugates SUMO1, SUMO2 and SUMO3 from targeted proteins. Processes preferentially poly-SUMO2 and poly-SUMO3 chains, but does not efficiently process SUMO1, SUMO2 and SUMO3 precursors. Deconjugates SUMO1 from RXRA, leading to transcriptional activation. Involved in chromosome alignment and spindle assembly, by regulating the kinetochore CENPH-CENPI-CENPK complex. Desumoylates PML and CENPI, protecting them from degradation by the ubiquitin ligase RNF4, which targets polysumoylated proteins for proteasomal degradation. Also desumoylates RPA1, thus preventing recruitment of RAD51 to the DNA damage foci to initiate DNA repair through homologous recombination. The polypeptide is Sentrin-specific protease 6 (Senp6) (Mus musculus (Mouse)).